The chain runs to 458 residues: UDP-N-acetylmuramate--L-alanine ligase (458 aa).

118–124 (GTHGKTT) is an ATP binding site.

The protein belongs to the MurCDEF family.

The protein resides in the cytoplasm. The enzyme catalyses UDP-N-acetyl-alpha-D-muramate + L-alanine + ATP = UDP-N-acetyl-alpha-D-muramoyl-L-alanine + ADP + phosphate + H(+). It participates in cell wall biogenesis; peptidoglycan biosynthesis. Functionally, cell wall formation. This is UDP-N-acetylmuramate--L-alanine ligase from Clostridium botulinum (strain Langeland / NCTC 10281 / Type F).